The following is a 233-amino-acid chain: Merozoite surface protein 1 (233 aa).

The first 19 residues, 1-19 (MKIIFFLCSFLFFIINTQC), serve as a signal peptide directing secretion. The segment covering 58–67 (SGTAVTTSTP) has biased composition (polar residues). The segment at 58 to 110 (SGTAVTTSTPGSKGSVASGGSGGSVASGGSVASGGSGNSRRTNPSDNSSDSDA) is disordered. The span at 74–94 (ASGGSGGSVASGGSVASGGSG) shows a compositional bias: gly residues. Residues 95–107 (NSRRTNPSDNSSD) are compositionally biased toward polar residues. The N-linked (GlcNAc...) asparagine glycan is linked to N104.

In terms of assembly, forms a complex composed of subunits p83, p30, p38, and p42 which remain non-covalently associated; the complex is formed at the merozoite surface prior to egress from host erythrocytes. Forms a complex composed of processed MSP1 subunits, MSP6 subunit p36 and MSP7; the complex is formed at the merozoite surface prior to egress from host erythrocytes. Within the complex, interacts (via subunit p38) with MSP6 subunit p36 and (via subunits p83, p30 and p38) with MSP7 (via subunit p22). Forms a complex composed of MSP1, MSP6, DBLMSP1 and DBLMSP2. Within the complex, interacts (via subunit p38) with DBLMSP1 and DBLMSP2. Forms a complex composed of MSP1, and rhoptry proteins RhopH3, RAP1 and CLAG9/RhopH3. Within the complex, interacts (via subunits p42 and p19) with RhopH3 (via C-terminus). Forms a complex composed of MSP1, MSP6, MSP7, MSP9 and MSP3; within the complex, MSP6 and MSP9 mediate the binding to the host erythrocyte. Interacts (via subunits p19 and p42) with MSP9; the interaction is direct; MSP1 subunits p19 or p42, and MSP9 form a co-ligand complex that interacts with host SLC4A1/Band 3 protein. May interact with PFD6. Interacts with host spectrin. Post-translationally, the p190 precursor is cleaved by SUB1 prior to merozoite egress into 4 subunits p83, p30, p38, and p42 which remain non-covalently associated. SUB1-mediated proteolytic cleavage occurs in an orderly manner; the first cleavage occurs at the p83/p30 site, followed by cleavage at the p30/p38 site, the last cleavage occurs at the p38/p42 site. The order of cleavage is essential for parasite viability. SUB1-mediated processing is essential for merozoite egress. In a second processing step during erythrocyte invasion, p42 is cleaved by SUB2 into p33 and p19; the latter remains attached to the merozoite surface via its GPI-anchor and stays on the surface during the subsequent ring stage.

The protein resides in the cell membrane. It is found in the secreted. Its function is as follows. During the asexual blood stage, involved in merozoite egress from host erythrocytes possibly via its interaction with the host cytoskeleton protein spectrin resulting in the destabilization of the host cytoskeleton and thus leading to erythrocyte cell membrane rupture. Involved in the binding to host erythrocytes and is required for host erythrocyte invasion. This is Merozoite surface protein 1 from Plasmodium falciparum (isolate CDC / Honduras).